The primary structure comprises 275 residues: 2-C-methyl-D-erythritol 4-phosphate cytidylyltransferase (275 aa).

It belongs to the IspD/TarI cytidylyltransferase family. IspD subfamily.

The enzyme catalyses 2-C-methyl-D-erythritol 4-phosphate + CTP + H(+) = 4-CDP-2-C-methyl-D-erythritol + diphosphate. Its pathway is isoprenoid biosynthesis; isopentenyl diphosphate biosynthesis via DXP pathway; isopentenyl diphosphate from 1-deoxy-D-xylulose 5-phosphate: step 2/6. Functionally, catalyzes the formation of 4-diphosphocytidyl-2-C-methyl-D-erythritol from CTP and 2-C-methyl-D-erythritol 4-phosphate (MEP). The polypeptide is 2-C-methyl-D-erythritol 4-phosphate cytidylyltransferase (Corynebacterium jeikeium (strain K411)).